A 160-amino-acid chain; its full sequence is Allophycocyanin alpha chain (160 aa).

Asn-70 carries the post-translational modification N4-methylasparagine. (2R,3E)-phycocyanobilin is bound at residue Cys-80.

Belongs to the phycobiliprotein family. As to quaternary structure, component of the phycobilisome. Heterodimer of an alpha and a beta chain. In terms of processing, contains one covalently linked phycocyanobilin chromophore.

It localises to the cellular thylakoid membrane. Functionally, light-harvesting photosynthetic bile pigment-protein from the phycobiliprotein complex. Allophycocyanin has a maximum absorption at approximately 650 nanometers. This Mastigocladus laminosus (Fischerella sp.) protein is Allophycocyanin alpha chain (apcA).